Consider the following 486-residue polypeptide: Cytochrome P450 monooxygenase aclC (486 aa).

Cysteine 427 is a heme binding site.

Belongs to the cytochrome P450 family. Heme serves as cofactor.

It functions in the pathway mycotoxin biosynthesis. In terms of biological role, cytochrome P450 monooxygenase; part of the gene cluster that mediates the biosynthesis of aspirochlorine (or antibiotic A30641), an unusual halogenated spiro compound with distinctive antifungal properties due to selective inhibition of protein biosynthesis, and which is also active against bacteria, viruses, and murine tumor cells. The non-ribosomal peptide synthetase (NRPS) aclP is responsible the formation of the diketopiperazine (DKP) core from the condensation of 2 phenylalanine residues. One Phe residue is tailored into chlorotyrosine by hydroxylation and chlorination, whereas the second Phe undergoes an unprecedented C-C bond cleavage to be converted into glycine. After formation of the DKP, sulfur is incorporated into the DKP by conjugation with glutathione by aclG, followed by its stepwise degradation to the thiol by aclI, aclJ and aclK, and the dithiol oxidation by aclT. In addition, oxygenases (aclB, aclC, aclL and aclO) and O-methyltransferases (aclM and aclU) act as tailoring enzymes to produce the intermediate dechloroaspirochlorine. Ultimately, chlorination of dechloroaspirochlorine by the halogenase aclH is the last step in the aspirochlorine pathway. This chain is Cytochrome P450 monooxygenase aclC, found in Aspergillus oryzae (strain ATCC 42149 / RIB 40) (Yellow koji mold).